The chain runs to 261 residues: Cytochrome c oxidase subunit 3 (261 aa).

At Met1 to Pro15 the chain is on the mitochondrial matrix side. A helical membrane pass occupies residues Trp16–Trp34. The Mitochondrial intermembrane portion of the chain corresponds to Phe35–Leu40. Residues Ile41 to Thr66 form a helical membrane-spanning segment. The Mitochondrial matrix portion of the chain corresponds to Phe67–Thr72. Residues Pro73–Ser105 traverse the membrane as a helical segment. Topologically, residues Leu106–Glu128 are mitochondrial intermembrane. Residues Val129–Met152 traverse the membrane as a helical segment. Residues Glu153–Asn155 lie on the Mitochondrial matrix side of the membrane. A helical membrane pass occupies residues Arg156–Glu183. Over Ala184–Asp190 the chain is Mitochondrial intermembrane. A helical membrane pass occupies residues Gly191–Leu223. At Lys224 to His232 the chain is on the mitochondrial matrix side. A helical transmembrane segment spans residues Phe233–Ile256. The Mitochondrial intermembrane segment spans residues Tyr257 to Ser261.

The protein belongs to the cytochrome c oxidase subunit 3 family. In terms of assembly, component of the cytochrome c oxidase (complex IV, CIV), a multisubunit enzyme composed of 14 subunits. The complex is composed of a catalytic core of 3 subunits MT-CO1, MT-CO2 and MT-CO3, encoded in the mitochondrial DNA, and 11 supernumerary subunits COX4I, COX5A, COX5B, COX6A, COX6B, COX6C, COX7A, COX7B, COX7C, COX8 and NDUFA4, which are encoded in the nuclear genome. The complex exists as a monomer or a dimer and forms supercomplexes (SCs) in the inner mitochondrial membrane with NADH-ubiquinone oxidoreductase (complex I, CI) and ubiquinol-cytochrome c oxidoreductase (cytochrome b-c1 complex, complex III, CIII), resulting in different assemblies (supercomplex SCI(1)III(2)IV(1) and megacomplex MCI(2)III(2)IV(2)).

Its subcellular location is the mitochondrion inner membrane. It carries out the reaction 4 Fe(II)-[cytochrome c] + O2 + 8 H(+)(in) = 4 Fe(III)-[cytochrome c] + 2 H2O + 4 H(+)(out). Component of the cytochrome c oxidase, the last enzyme in the mitochondrial electron transport chain which drives oxidative phosphorylation. The respiratory chain contains 3 multisubunit complexes succinate dehydrogenase (complex II, CII), ubiquinol-cytochrome c oxidoreductase (cytochrome b-c1 complex, complex III, CIII) and cytochrome c oxidase (complex IV, CIV), that cooperate to transfer electrons derived from NADH and succinate to molecular oxygen, creating an electrochemical gradient over the inner membrane that drives transmembrane transport and the ATP synthase. Cytochrome c oxidase is the component of the respiratory chain that catalyzes the reduction of oxygen to water. Electrons originating from reduced cytochrome c in the intermembrane space (IMS) are transferred via the dinuclear copper A center (CU(A)) of subunit 2 and heme A of subunit 1 to the active site in subunit 1, a binuclear center (BNC) formed by heme A3 and copper B (CU(B)). The BNC reduces molecular oxygen to 2 water molecules using 4 electrons from cytochrome c in the IMS and 4 protons from the mitochondrial matrix. In Hippopotamus amphibius (Hippopotamus), this protein is Cytochrome c oxidase subunit 3 (MT-CO3).